Reading from the N-terminus, the 283-residue chain is MKVITKVAELRRALADVRNAEKRIGFVPTMGYLHDGHLALISASREHCDVTVVSIFVNPTQFGPNEDLSRYPRDFARDEALCGSAGVSIIFAPSAEEIYPAQFESFVEPGELAKPLCGAFRPGHFRGVATVVCKLFNMVQPDVAYFGQKDFQQCAVIRRMTVDLNLPIEIVTVPTVREPDGLAMSSRNRYLCPEERDRSLAISRGLFAAAHEFASGERDAATLIALARRHLERVDRLQYLELVDPGTLRIADSPLRYPAVLCVAAYVGSTRLIDNVVLSWSPS.

30–37 contacts ATP; sequence MGYLHDGH. His-37 functions as the Proton donor in the catalytic mechanism. Gln-61 lines the (R)-pantoate pocket. Gln-61 contributes to the beta-alanine binding site. 147 to 150 contributes to the ATP binding site; that stretch reads GQKD. Gln-153 serves as a coordination point for (R)-pantoate. ATP is bound by residues Val-176 and 184 to 187; that span reads MSSR.

This sequence belongs to the pantothenate synthetase family. As to quaternary structure, homodimer.

It localises to the cytoplasm. The catalysed reaction is (R)-pantoate + beta-alanine + ATP = (R)-pantothenate + AMP + diphosphate + H(+). It participates in cofactor biosynthesis; (R)-pantothenate biosynthesis; (R)-pantothenate from (R)-pantoate and beta-alanine: step 1/1. Catalyzes the condensation of pantoate with beta-alanine in an ATP-dependent reaction via a pantoyl-adenylate intermediate. The chain is Pantothenate synthetase 1 from Bradyrhizobium diazoefficiens (strain JCM 10833 / BCRC 13528 / IAM 13628 / NBRC 14792 / USDA 110).